Reading from the N-terminus, the 294-residue chain is Ribosomal protein L11 methyltransferase (294 aa).

Residues threonine 145, glycine 166, aspartate 188, and asparagine 230 each contribute to the S-adenosyl-L-methionine site.

This sequence belongs to the methyltransferase superfamily. PrmA family.

The protein localises to the cytoplasm. The catalysed reaction is L-lysyl-[protein] + 3 S-adenosyl-L-methionine = N(6),N(6),N(6)-trimethyl-L-lysyl-[protein] + 3 S-adenosyl-L-homocysteine + 3 H(+). In terms of biological role, methylates ribosomal protein L11. The polypeptide is Ribosomal protein L11 methyltransferase (Glaesserella parasuis serovar 5 (strain SH0165) (Haemophilus parasuis)).